The following is a 41-amino-acid chain: uncharacterized protein (41 aa).

Residues 19-41 (NSTRNSSSSSRSSYSSRTTVFSL) are disordered.

This is an uncharacterized protein from Dictyostelium discoideum (Social amoeba).